The primary structure comprises 1441 residues: ABC transporter G family member 41 (1441 aa).

Residues 1 to 14 show a composition bias toward basic and acidic residues; that stretch reads MEDKKQQQQQQREE. The segment at 1–28 is disordered; sequence MEDKKQQQQQQREEAEAEEEAPVVPSSL. The 274-residue stretch at 159–432 folds into the ABC transporter 1 domain; it reads ATARGLSRRP…FESCGFKCPE (274 aa). An ATP-binding site is contributed by 192 to 199; that stretch reads GPPGCGKT. In terms of domain architecture, ABC transmembrane type-2 1 spans 510-722; the sequence is DLLKACFARE…AEIGLTGNEF (213 aa). 6 helical membrane-spanning segments follow: residues 528-548, 566-586, 600-620, 642-662, 672-692, and 758-778; these read FIYITKVVQLGLLAVITGTVF, SLFYALILLLVNGFPELAIAV, FYPAWAYAIPSFILKIPLSLV, FFCQLLILFLVHTGALSLFRC, ASSVGGTMSFLVILLFGGFII, and ASALIGFILLLNVGYAIGLTI. Residues 838 to 1090 form the ABC transporter 2 domain; that stretch reads ISFQDVNYYV…NVIHYFETIP (253 aa). Residue 883-890 participates in ATP binding; sequence GVTGAGKT. Residues 1163-1379 enclose the ABC transmembrane type-2 2 domain; the sequence is EQLKACIWKQ…TLNVFFTTQF (217 aa). The next 7 helical transmembrane spans lie at 1187–1207, 1215–1235, 1272–1292, 1300–1320, 1329–1349, 1357–1377, and 1413–1433; these read ILFITISCIVFGVLFWQQGDI, GLFTILGCMYGTTLFTGINNC, IPYVLVQILLIMFIAYPMIGY, FWFMYTIACTLLYFLYFGMMI, VASILASMFYTLQNLMSGFIV, WWIWLYYTSPLSWTLNVFFTT, and LAAIILAMFPILFAILFGLSI.

The protein belongs to the ABC transporter superfamily. ABCG family. PDR (TC 3.A.1.205) subfamily.

It localises to the membrane. May be a general defense protein. The protein is ABC transporter G family member 41 of Oryza sativa subsp. japonica (Rice).